A 246-amino-acid polypeptide reads, in one-letter code: NAD-dependent protein deacylase (246 aa).

The Deacetylase sirtuin-type domain occupies Pro2 to Ala246. Gly29 to Trp49 lines the NAD(+) pocket. Positions 74 and 77 each coordinate substrate. Position 107 to 110 (Gln107 to Asp110) interacts with NAD(+). The active-site Proton acceptor is His125. Zn(2+)-binding residues include Cys137, Cys140, Cys153, and Cys156. NAD(+) contacts are provided by residues Gly193–Ser195, Asn219–Glu221, and Ala237.

Belongs to the sirtuin family. Class III subfamily. The cofactor is Zn(2+).

It is found in the cytoplasm. The catalysed reaction is N(6)-acetyl-L-lysyl-[protein] + NAD(+) + H2O = 2''-O-acetyl-ADP-D-ribose + nicotinamide + L-lysyl-[protein]. It carries out the reaction N(6)-succinyl-L-lysyl-[protein] + NAD(+) + H2O = 2''-O-succinyl-ADP-D-ribose + nicotinamide + L-lysyl-[protein]. Functionally, NAD-dependent lysine deacetylase and desuccinylase that specifically removes acetyl and succinyl groups on target proteins. Modulates the activities of several proteins which are inactive in their acylated form. This Ralstonia nicotianae (strain ATCC BAA-1114 / GMI1000) (Ralstonia solanacearum) protein is NAD-dependent protein deacylase.